The chain runs to 378 residues: Isobutylamine N-hydroxylase (378 aa).

In terms of assembly, exists in dimeric or trimeric form depending upon buffer conditions. It can form an isobutylamine N-hydroxylase two component enzyme system formed of a flavin reductase component (VlmR) and a monooxygenase component (VlmH).

The catalysed reaction is 2-methylpropan-1-amine + FADH2 + O2 = N-(2-methylpropyl)hydroxylamine + FAD + H2O + 2 H(+). It carries out the reaction 2-methylpropan-1-amine + FMNH2 + O2 = N-(2-methylpropyl)hydroxylamine + FMN + H2O + 2 H(+). Inhibited by 5',5'-dithio-bis(2-nitrobenzoic acid) (DTNB) and 4-(hydroxymercuri)benzoic acid (p-HMB). Its function is as follows. Involved in the biosynthesis of the azoxy antibiotic valanimycin, which has an antitumor activity. Catalyzes the oxidation of isobutylamine to isobutylhydroxylamine via the formation of a flavin 4a-hydroperoxide. Unlike other known N-hydroxylases, isobutylamine N-hydroxylase cannot carry out the reduction of the flavin cofactor and requires the NADPH-flavin oxidoreductase VlmR. Also able to oxidize propan-1-amine, butan-1-amine, butan-2-amine and benzylamine. It has a similar activity with either FMNH(2) or FADH(2). The protein is Isobutylamine N-hydroxylase of Streptomyces viridifaciens.